The sequence spans 481 residues: Glutamate--tRNA ligase (481 aa).

Residues 9–19 carry the 'HIGH' region motif; that stretch reads PSPTGNLHIGT. Residues 247–251 carry the 'KMSKS' region motif; it reads KLSKR. Lys250 provides a ligand contact to ATP.

The protein belongs to the class-I aminoacyl-tRNA synthetase family. Glutamate--tRNA ligase type 1 subfamily. Monomer.

Its subcellular location is the cytoplasm. It carries out the reaction tRNA(Glu) + L-glutamate + ATP = L-glutamyl-tRNA(Glu) + AMP + diphosphate. Functionally, catalyzes the attachment of glutamate to tRNA(Glu) in a two-step reaction: glutamate is first activated by ATP to form Glu-AMP and then transferred to the acceptor end of tRNA(Glu). In Trichormus variabilis (strain ATCC 29413 / PCC 7937) (Anabaena variabilis), this protein is Glutamate--tRNA ligase.